Consider the following 244-residue polypeptide: Ethylene-responsive transcription factor 1 (244 aa).

The AP2/ERF DNA-binding region spans 106-164 (HYRGVRQRPWGKFAAEIRDPAKNGARVWLGTYESAEEAALAYGKAAFRMRGTKALLNFP). Over residues 186–198 (SASSSVSSASESG) the composition is skewed to low complexity. The interval 186-214 (SASSSVSSASESGSPKRRRKGVAAKQAEL) is disordered.

Belongs to the ethylene-response factor family. Class 1 subfamily. As to expression, present in stems.

The protein resides in the nucleus. Its function is as follows. Involved in the regulation of gene expression during fruit ripening, by stress factors and by components of stress signal transduction pathways. Transcription factor that binds to the GCC-box pathogenesis-related promoter element. Probably acts as a transcriptional activator and may be involved in disease resistance pathways. The protein is Ethylene-responsive transcription factor 1 (ERF1) of Solanum lycopersicum (Tomato).